The primary structure comprises 548 residues: Zinc metalloproteinase (548 aa).

Residues 1–28 form the signal peptide; it reads MKKYYAVTGIALAVGMLCTTQLAGATQA. H362 lines the Zn(2+) pocket. The active site involves E363. The Zn(2+) site is built by H366 and E386. The interval 440–459 is disordered; that stretch reads SNWKPTATNPNDNNDQGGVH. Polar residues predominate over residues 442–459; sequence WKPTATNPNDNNDQGGVH. H459 (proton donor) is an active-site residue.

It belongs to the peptidase M4 family. Requires Ca(2+) as cofactor. Zn(2+) serves as cofactor.

The protein resides in the secreted. It is found in the cell wall. Functionally, zinc metalloprotease with hemolytic properties. The sequence is that of Zinc metalloproteinase (hly) from Renibacterium salmoninarum.